A 569-amino-acid polypeptide reads, in one-letter code: MFLELKAQATSILKDAIQKAGLEIEDSELYFETSSYADLASRAAFRLASLYRQNPKELATRIVSAVEIPDGSYIGKVSASGPYINFHASRRYMDKTVATVLEEKEKFGCGAPKDKILLEHTSANPNGPLHVGHIRNSIIGDTLARILRRAGYDVEVQYYVNDMGRQIAVVSWACERFELDLSRKSDSAIADVYIKANVELDKNPEYVKEIDALMEKVEAGDVKTIDSFYKAVSLAISGIKETLLRLNVVHDKFVSESTFLKSGAVHDIVERIKATGRTKTDKGALVVDLSDYGFKKTLVIQRSNGTSLYTTRDLAYHEWKAGQADRIIDIFGADHKLISGQLRATLNSIGVKEPEVVIFEFVSLPEGSMSTRRGQFISADELFDRVTEAALEQVETRRPETSEEFKKQVAEMVGIGAVRYDIVRVSPEKSTVFNWKEALDFEKQGAPYIQYSHARACSILEKAKEEAAWNSSAEIDPSLLVEDTEIDLIKKMASFDRVIDLAARELKPHVLAIYARELADAFNQFYRFVPVIAAEDEKVRASRLALVNCARIVLANSLDTLGIAAPESM.

Positions 123–133 (ANPNGPLHVGH) match the 'HIGH' region motif.

It belongs to the class-I aminoacyl-tRNA synthetase family.

The protein localises to the cytoplasm. The catalysed reaction is tRNA(Arg) + L-arginine + ATP = L-arginyl-tRNA(Arg) + AMP + diphosphate. The protein is Arginine--tRNA ligase of Methanosarcina barkeri (strain Fusaro / DSM 804).